The chain runs to 537 residues: ATP synthase subunit alpha (537 aa).

Position 171–178 (171–178 (GDRQTGKT)) interacts with ATP.

Belongs to the ATPase alpha/beta chains family. F-type ATPases have 2 components, CF(1) - the catalytic core - and CF(0) - the membrane proton channel. CF(1) has five subunits: alpha(3), beta(3), gamma(1), delta(1), epsilon(1). CF(0) has four main subunits: a, b, b' and c.

The protein localises to the cell inner membrane. The enzyme catalyses ATP + H2O + 4 H(+)(in) = ADP + phosphate + 5 H(+)(out). Functionally, produces ATP from ADP in the presence of a proton gradient across the membrane. The alpha chain is a regulatory subunit. In Chloroherpeton thalassium (strain ATCC 35110 / GB-78), this protein is ATP synthase subunit alpha.